The sequence spans 333 residues: EP300-interacting inhibitor of differentiation 3 (333 aa).

This sequence belongs to the NSE4 family. Component of the SMC5-SMC6 complex which consists at least of SMC5, SMC6, NSMCE2, NSMCE1, NSMCE4A or EID3 and NSMCE3; EID3 seems to be a testis-specific subunit. NSMCE1, NSMCE4A or EID3 and NSMCE3 probably form a subcomplex that bridges the head domains of the SMC5:SMC6 heterodimer. Homodimer, and heterodimer with EID2. Interacts with the C-terminal region of CREBBP. As to expression, highly expressed in testis.

The protein resides in the nucleus. It localises to the cytoplasm. Its subcellular location is the chromosome. It is found in the telomere. Its function is as follows. Tissue-specific component of the SMC5-SMC6 complex, a complex involved in repair of DNA double-strand breaks by homologous recombination. The complex may promote sister chromatid homologous recombination by recruiting the SMC1-SMC3 cohesin complex to double-strand breaks. The complex is required for telomere maintenance via recombination and mediates sumoylation of shelterin complex (telosome) components. In terms of biological role, acts as a repressor of nuclear receptor-dependent transcription possibly by interfering with CREBBP-dependent coactivation. May function as a coinhibitor of other CREBBP/EP300-dependent transcription factors. In Homo sapiens (Human), this protein is EP300-interacting inhibitor of differentiation 3.